A 277-amino-acid polypeptide reads, in one-letter code: Probable cytochrome c oxidase subunit 3 (277 aa).

6 helical membrane passes run 20–40 (PWPI…VSFM), 45–65 (FNHY…YSWW), 88–108 (IGMA…FASF), 173–193 (CVTA…MQAY), 211–231 (FYLA…FLIV), and 255–275 (AWYW…VYIF).

This sequence belongs to the cytochrome c oxidase subunit 3 family.

Its subcellular location is the cell membrane. It catalyses the reaction 4 Fe(II)-[cytochrome c] + O2 + 8 H(+)(in) = 4 Fe(III)-[cytochrome c] + 2 H2O + 4 H(+)(out). The chain is Probable cytochrome c oxidase subunit 3 (ctaE) from Rickettsia bellii (strain RML369-C).